Consider the following 110-residue polypeptide: Phosphoribosyl-AMP cyclohydrolase (110 aa).

Asp80 serves as a coordination point for Mg(2+). Residue Cys81 coordinates Zn(2+). Residues Asp82 and Asp84 each coordinate Mg(2+). Cys97 and Cys104 together coordinate Zn(2+).

It belongs to the PRA-CH family. As to quaternary structure, homodimer. It depends on Mg(2+) as a cofactor. Requires Zn(2+) as cofactor.

The protein localises to the cytoplasm. It catalyses the reaction 1-(5-phospho-beta-D-ribosyl)-5'-AMP + H2O = 1-(5-phospho-beta-D-ribosyl)-5-[(5-phospho-beta-D-ribosylamino)methylideneamino]imidazole-4-carboxamide. It functions in the pathway amino-acid biosynthesis; L-histidine biosynthesis; L-histidine from 5-phospho-alpha-D-ribose 1-diphosphate: step 3/9. Functionally, catalyzes the hydrolysis of the adenine ring of phosphoribosyl-AMP. This is Phosphoribosyl-AMP cyclohydrolase from Clostridium botulinum (strain Okra / Type B1).